The chain runs to 435 residues: tRNA modification GTPase MnmE (435 aa).

The (6S)-5-formyl-5,6,7,8-tetrahydrofolate site is built by Arg-20, Glu-77, and Lys-117. Positions 214–359 (GFKIVIVGAP…FMKELESFCL (146 aa)) constitute a TrmE-type G domain. GTP contacts are provided by residues 224–229 (NSGKSS), 243–249 (TEEAGTT), and 268–271 (DTAG). Mg(2+)-binding residues include Ser-228 and Thr-249. Lys-435 contributes to the (6S)-5-formyl-5,6,7,8-tetrahydrofolate binding site.

Belongs to the TRAFAC class TrmE-Era-EngA-EngB-Septin-like GTPase superfamily. TrmE GTPase family. In terms of assembly, homodimer. Heterotetramer of two MnmE and two MnmG subunits. Requires K(+) as cofactor.

It is found in the cytoplasm. In terms of biological role, exhibits a very high intrinsic GTPase hydrolysis rate. Involved in the addition of a carboxymethylaminomethyl (cmnm) group at the wobble position (U34) of certain tRNAs, forming tRNA-cmnm(5)s(2)U34. This Bartonella henselae (strain ATCC 49882 / DSM 28221 / CCUG 30454 / Houston 1) (Rochalimaea henselae) protein is tRNA modification GTPase MnmE.